The sequence spans 513 residues: ATP synthase subunit alpha (513 aa).

169–176 (GDRQTGKT) contacts ATP.

The protein belongs to the ATPase alpha/beta chains family. F-type ATPases have 2 components, CF(1) - the catalytic core - and CF(0) - the membrane proton channel. CF(1) has five subunits: alpha(3), beta(3), gamma(1), delta(1), epsilon(1). CF(0) has three main subunits: a(1), b(2) and c(9-12). The alpha and beta chains form an alternating ring which encloses part of the gamma chain. CF(1) is attached to CF(0) by a central stalk formed by the gamma and epsilon chains, while a peripheral stalk is formed by the delta and b chains.

The protein localises to the cell inner membrane. The catalysed reaction is ATP + H2O + 4 H(+)(in) = ADP + phosphate + 5 H(+)(out). Functionally, produces ATP from ADP in the presence of a proton gradient across the membrane. The alpha chain is a regulatory subunit. The chain is ATP synthase subunit alpha from Proteus mirabilis (strain HI4320).